A 239-amino-acid chain; its full sequence is Small ribosomal subunit protein uS3 (239 aa).

Residues 39–107 form the KH type-2 domain; it reads VRQVLRKKMS…PVHINVIEVR (69 aa). Positions 214 to 239 are disordered; that stretch reads SQEKQDDGSRGDRNADRSSRRSREVR. Residues 216-239 are compositionally biased toward basic and acidic residues; sequence EKQDDGSRGDRNADRSSRRSREVR.

The protein belongs to the universal ribosomal protein uS3 family. As to quaternary structure, part of the 30S ribosomal subunit. Forms a tight complex with proteins S10 and S14.

Binds the lower part of the 30S subunit head. Binds mRNA in the 70S ribosome, positioning it for translation. This chain is Small ribosomal subunit protein uS3, found in Xylella fastidiosa (strain M23).